Consider the following 146-residue polypeptide: Hemoglobin subunit beta (146 aa).

The residue at position 1 (V1) is an N-acetylvaline. In terms of domain architecture, Globin spans 2–146 (HLSSEEKGLI…VANALAHKYH (145 aa)). T12 carries the post-translational modification Phosphothreonine. K59 carries the N6-acetyllysine modification. H63 serves as a coordination point for heme b. K82 carries the N6-acetyllysine modification. H92 is a binding site for heme b. C93 carries the post-translational modification S-nitrosocysteine. The residue at position 144 (K144) is an N6-acetyllysine.

It belongs to the globin family. Heterotetramer of two alpha chains and two beta chains. Red blood cells.

Involved in oxygen transport from the lung to the various peripheral tissues. This is Hemoglobin subunit beta (HBB) from Potorous tridactylus (Potoroo).